The primary structure comprises 555 residues: Carboxylic ester hydrolase (555 aa).

The signal sequence occupies residues 1–19; sequence MELSVIALLLLGFVNFSWQ. A disulfide bridge links cysteine 86 with cysteine 107. 2 N-linked (GlcNAc...) asparagine glycosylation sites follow: asparagine 120 and asparagine 144. Serine 211 functions as the Acyl-ester intermediate in the catalytic mechanism. Cysteine 263 and cysteine 274 are joined by a disulfide. The active-site Charge relay system is the glutamate 336. 2 N-linked (GlcNAc...) asparagine glycosylation sites follow: asparagine 369 and asparagine 397. Histidine 459 acts as the Charge relay system in catalysis. Residues asparagine 473 and asparagine 533 are each glycosylated (N-linked (GlcNAc...) asparagine).

It belongs to the type-B carboxylesterase/lipase family. Post-translationally, N-glycosylated. Expressed in several tissues, including epidermis (at protein level), fat body (at protein level), gut (at protein level), muscle (at protein level), and venom gland (at protein level).

Its subcellular location is the secreted. It carries out the reaction a carboxylic ester + H2O = an alcohol + a carboxylate + H(+). Its function is as follows. Lipolytic agent that may be involved in distributing the venom via degradation of blood triglycerides. The recombinant protein degrades triglycerides and exhibits high lipolytic activity toward long-chain triglycerides (tested on tributyrin, trioctanoin and triolein). Does not affect mammalian cells. This Bombus ignitus (Bumblebee) protein is Carboxylic ester hydrolase (vCaE).